We begin with the raw amino-acid sequence, 755 residues long: Periplasmic nitrate reductase (755 aa).

The tat-type signal signal peptide spans 1–32; the sequence is MSTSRRDFLKYFAMSAAVAAASGAGFGSLALA. The 4Fe-4S Mo/W bis-MGD-type domain maps to 38-93; that stretch reads EKWVKGVCRYCGTGCGVLVGVKDGKAVAIQGDPNNHNAGLLCLKGSLLIPVLNSKE. [4Fe-4S] cluster contacts are provided by C45, C48, C52, and C79. Residues K81, Q143, N168, C172, 208 to 212, 236 to 238, 255 to 257, M340, Q344, N450, 475 to 477, and 647 to 656 contribute to the Mo-bis(molybdopterin guanine dinucleotide) site; these read NTSEA, DPR, GTD, IEA, and SMRVIDHWHT. Residues 648-653 and F721 each bind substrate; that span reads MRVIDH. N729 and K746 together coordinate Mo-bis(molybdopterin guanine dinucleotide).

The protein belongs to the prokaryotic molybdopterin-containing oxidoreductase family. NasA/NapA/NarB subfamily. As to quaternary structure, monomer. Component of the periplasmic nitrate reductase NapAB complex composed of NapA and NapB. It depends on [4Fe-4S] cluster as a cofactor. The cofactor is Mo-bis(molybdopterin guanine dinucleotide). In terms of processing, predicted to be exported by the Tat system. The position of the signal peptide cleavage has been experimentally proven.

The protein resides in the periplasm. The enzyme catalyses 2 Fe(II)-[cytochrome] + nitrate + 2 H(+) = 2 Fe(III)-[cytochrome] + nitrite + H2O. Its activity is regulated as follows. Activated by potassium and sodium ions and inhibited by magnesium and calcium ions. Functionally, catalytic subunit of the periplasmic nitrate reductase complex NapAB. Receives electrons from NapB and catalyzes the reduction of nitrate to nitrite. This Desulfovibrio desulfuricans (strain ATCC 27774 / DSM 6949 / MB) protein is Periplasmic nitrate reductase.